The sequence spans 1344 residues: Protein stu1 (1344 aa).

One copy of the HEAT 1 repeat lies at 93–131; it reads LYPLLVERLGDHKERIRAQAAQSFTDMWLAAPEEVEQCV. The tract at residues 265–292 is disordered; that stretch reads HRPVSRAETQASRSVSRLDTHQRPASRM. The HEAT 2 repeat unit spans residues 508-544; it reads VTFTTRILQHVSGACQDKNVQLRLFAAGWLKTLIQKQ. 5 disordered regions span residues 606–637, 651–847, 914–945, 984–1004, and 1031–1054; these read RSLLEKDPANPNAHQSAPKDSGPSRKGLANGT, AAQK…STPR, LTENQTPQPSKVHSDSPIVSNKRVSNQDESVP, PVTHQPDSVTDSSKPSGLSSS, and SLPHRSSPKHNVLGELTSNEPSQR. 2 stretches are compositionally biased toward polar residues: residues 691–705 and 735–747; these read VRTVPTGTSLSSLSS and ATDSSTRHGNQID. A compositionally biased stretch (low complexity) spans 748–769; that stretch reads GSPSAAKSKSSTPSLKSVSSTG. Polar residues-rich tracts occupy residues 828–847 and 914–942; these read FSVTPISPNSVSLETPSTPR and LTENQTPQPSKVHSDSPIVSNKRVSNQDE. Positions 995-1004 are enriched in low complexity; that stretch reads SSKPSGLSSS.

The protein belongs to the CLASP family. In terms of assembly, interacts with microtubules.

It localises to the cytoplasm. The protein resides in the cytoskeleton. Its subcellular location is the nucleus. The protein localises to the spindle. Microtubule binding protein that promotes the stabilization of dynamic microtubules. Required for mitotic spindle formation. The polypeptide is Protein stu1 (stu1) (Aspergillus fumigatus (strain ATCC MYA-4609 / CBS 101355 / FGSC A1100 / Af293) (Neosartorya fumigata)).